A 360-amino-acid polypeptide reads, in one-letter code: Malonyl CoA-acyl carrier protein transacylase, mitochondrial (360 aa).

A mitochondrion-targeting transit peptide spans 1 to 24 (MKLLTFPGQGTSISISILKAIIRN). Residues S105 and H235 contribute to the active site.

This sequence belongs to the FabD family.

It is found in the mitochondrion. It catalyses the reaction holo-[ACP] + malonyl-CoA = malonyl-[ACP] + CoA. The protein operates within lipid metabolism; fatty acid biosynthesis. In terms of biological role, involved in biosynthesis of fatty acids in mitochondria. The chain is Malonyl CoA-acyl carrier protein transacylase, mitochondrial (MCT1) from Saccharomyces cerevisiae (strain ATCC 204508 / S288c) (Baker's yeast).